The following is a 309-amino-acid chain: Electron transfer flavoprotein subunit alpha (309 aa).

An FAD-binding site is contributed by leucine 253 to aspartate 281.

Belongs to the ETF alpha-subunit/FixB family. As to quaternary structure, heterodimer of an alpha and a beta subunit. Requires FAD as cofactor.

In terms of biological role, the electron transfer flavoprotein serves as a specific electron acceptor for other dehydrogenases. It transfers the electrons to the main respiratory chain via ETF-ubiquinone oxidoreductase (ETF dehydrogenase). The protein is Electron transfer flavoprotein subunit alpha (etfA) of Pseudomonas aeruginosa (strain ATCC 15692 / DSM 22644 / CIP 104116 / JCM 14847 / LMG 12228 / 1C / PRS 101 / PAO1).